We begin with the raw amino-acid sequence, 367 residues long: Dual-specificity RNA methyltransferase RlmN (367 aa).

Glutamate 93 acts as the Proton acceptor in catalysis. Positions 99–333 constitute a Radical SAM core domain; sequence EEDRATLCVS…VIVRKTRGDD (235 aa). An intrachain disulfide couples cysteine 106 to cysteine 338. 3 residues coordinate [4Fe-4S] cluster: cysteine 113, cysteine 117, and cysteine 120. Residues 162–163, serine 194, 216–218, and asparagine 295 each bind S-adenosyl-L-methionine; these read GE and SLH. The S-methylcysteine intermediate role is filled by cysteine 338.

This sequence belongs to the radical SAM superfamily. RlmN family. Requires [4Fe-4S] cluster as cofactor.

It localises to the cytoplasm. The enzyme catalyses adenosine(2503) in 23S rRNA + 2 reduced [2Fe-2S]-[ferredoxin] + 2 S-adenosyl-L-methionine = 2-methyladenosine(2503) in 23S rRNA + 5'-deoxyadenosine + L-methionine + 2 oxidized [2Fe-2S]-[ferredoxin] + S-adenosyl-L-homocysteine. It catalyses the reaction adenosine(37) in tRNA + 2 reduced [2Fe-2S]-[ferredoxin] + 2 S-adenosyl-L-methionine = 2-methyladenosine(37) in tRNA + 5'-deoxyadenosine + L-methionine + 2 oxidized [2Fe-2S]-[ferredoxin] + S-adenosyl-L-homocysteine. In terms of biological role, specifically methylates position 2 of adenine 2503 in 23S rRNA and position 2 of adenine 37 in tRNAs. m2A2503 modification seems to play a crucial role in the proofreading step occurring at the peptidyl transferase center and thus would serve to optimize ribosomal fidelity. The sequence is that of Dual-specificity RNA methyltransferase RlmN from Aeromonas hydrophila subsp. hydrophila (strain ATCC 7966 / DSM 30187 / BCRC 13018 / CCUG 14551 / JCM 1027 / KCTC 2358 / NCIMB 9240 / NCTC 8049).